A 172-amino-acid chain; its full sequence is UPF0398 protein gbs0290 (172 aa).

Belongs to the UPF0398 family.

This is UPF0398 protein gbs0290 from Streptococcus agalactiae serotype III (strain NEM316).